Here is a 309-residue protein sequence, read N- to C-terminus: Cytochrome c1, heme protein, mitochondrial (309 aa).

Residues 1-61 (MFSNLSKRWA…LYADSLTAEA (61 aa)) constitute a mitochondrion transit peptide. The Mitochondrial intermembrane segment spans residues 62 to 262 (MTAAEHGLHA…TFLNWCAEPE (201 aa)). Residues 88 to 241 (ASIRRGYQVY…DMVEYEDGTP (154 aa)) form the Cytochrome c domain. Heme c contacts are provided by Cys101, Cys104, and His105. Positions 131-140 (EFEYDDEPDE) are enriched in acidic residues. A disordered region spans residues 131–168 (EFEYDDEPDEQGNPKKRPGKLSDYIPGPYPNEQAARAA). Met225 lines the heme c pocket. The helical transmembrane segment at 263–296 (HDERKRLGLKTVIILSSLYLLSIWVKKFKWAGIK) threads the bilayer. Residues 297-309 (TRKFVFNPPKPRK) are Mitochondrial matrix-facing.

This sequence belongs to the cytochrome c family. As to quaternary structure, component of the ubiquinol-cytochrome c oxidoreductase (cytochrome b-c1 complex, complex III, CIII), a multisubunit enzyme composed of 10 subunits. The complex is composed of 3 respiratory subunits cytochrome b (COB), cytochrome c1 (CYT1) and Rieske protein (RIP1), 2 core protein subunits COR1 and QCR2, and 5 low-molecular weight protein subunits QCR6, QCR7, QCR8, QCR9 and QCR10. The complex exists as an obligatory dimer and forms supercomplexes (SCs) in the inner mitochondrial membrane with a monomer or a dimer of cytochrome c oxidase (complex IV, CIV), resulting in 2 different assemblies (supercomplexes III(2)IV and III(2)IV(2)). CYT1 interacts with COX5A at the CIII-CIV interface. Heme c serves as cofactor.

The protein localises to the mitochondrion inner membrane. The catalysed reaction is a quinol + 2 Fe(III)-[cytochrome c](out) = a quinone + 2 Fe(II)-[cytochrome c](out) + 2 H(+)(out). Functionally, component of the ubiquinol-cytochrome c oxidoreductase, a multisubunit transmembrane complex that is part of the mitochondrial electron transport chain which drives oxidative phosphorylation. The respiratory chain contains 3 multisubunit complexes succinate dehydrogenase (complex II, CII), ubiquinol-cytochrome c oxidoreductase (cytochrome b-c1 complex, complex III, CIII) and cytochrome c oxidase (complex IV, CIV), that cooperate to transfer electrons derived from NADH and succinate to molecular oxygen, creating an electrochemical gradient over the inner membrane that drives transmembrane transport and the ATP synthase. The cytochrome b-c1 complex catalyzes electron transfer from ubiquinol to cytochrome c, linking this redox reaction to translocation of protons across the mitochondrial inner membrane, with protons being carried across the membrane as hydrogens on the quinol. In the process called Q cycle, 2 protons are consumed from the matrix, 4 protons are released into the intermembrane space and 2 electrons are passed to cytochrome c. Cytochrome c1 is a catalytic core subunit containing a c-type heme. It transfers electrons from the [2Fe-2S] iron-sulfur cluster of the Rieske protein to cytochrome c. In Saccharomyces cerevisiae (strain ATCC 204508 / S288c) (Baker's yeast), this protein is Cytochrome c1, heme protein, mitochondrial (CYT1).